Consider the following 282-residue polypeptide: D-alanine aminotransferase (282 aa).

A substrate-binding site is contributed by Tyr-32. Arg-51 provides a ligand contact to pyridoxal 5'-phosphate. Residues Arg-99 and His-101 each contribute to the substrate site. Lys-146 acts as the Proton acceptor in catalysis. Lys-146 bears the N6-(pyridoxal phosphate)lysine mark. Glu-178 is a binding site for pyridoxal 5'-phosphate.

This sequence belongs to the class-IV pyridoxal-phosphate-dependent aminotransferase family. As to quaternary structure, homodimer. The cofactor is pyridoxal 5'-phosphate.

It carries out the reaction D-alanine + 2-oxoglutarate = D-glutamate + pyruvate. In terms of biological role, acts on the D-isomers of alanine, leucine, aspartate, glutamate, aminobutyrate, norvaline and asparagine. The enzyme transfers an amino group from a substrate D-amino acid to the pyridoxal phosphate cofactor to form pyridoxamine and an alpha-keto acid in the first half-reaction. The second half-reaction is the reverse of the first, transferring the amino group from the pyridoxamine to a second alpha-keto acid to form the product D-amino acid via a ping-pong mechanism. This is an important process in the formation of D-alanine and D-glutamate, which are essential bacterial cell wall components. The chain is D-alanine aminotransferase (dat) from Staphylococcus aureus (strain COL).